The sequence spans 491 residues: Putative ABC transporter ATP-binding protein TDE_0906 (491 aa).

2 consecutive ABC transporter domains span residues I2–L241 and L267–L491. Residues G36–T43 and G300–T307 each bind ATP.

This sequence belongs to the ABC transporter superfamily.

It is found in the cell inner membrane. Functionally, probably part of an ABC transporter complex. Responsible for energy coupling to the transport system. The sequence is that of Putative ABC transporter ATP-binding protein TDE_0906 from Treponema denticola (strain ATCC 35405 / DSM 14222 / CIP 103919 / JCM 8153 / KCTC 15104).